Consider the following 173-residue polypeptide: MTDTPTENLENTEVTPFTEGDREIAYRTDSNPTVAAGDSKRPAMIAPGAATGRRKEAIARVRIIPGSGQWKINGRTLEDYFPNKVHQQIVTEPFATAGVEGAYDVIARIGGGGVTGQAGALRLGIARALNNVDPEASRPALKKAGMLTRDARVKERKKAGLKKARKAPQYSKR.

Residues 1 to 15 (MTDTPTENLENTEVT) show a composition bias toward polar residues. Disordered regions lie at residues 1–26 (MTDT…EIAY) and 135–173 (EASR…YSKR). The segment covering 154–173 (KERKKAGLKKARKAPQYSKR) has biased composition (basic residues).

The protein belongs to the universal ribosomal protein uS9 family.

In Cutibacterium acnes (strain DSM 16379 / KPA171202) (Propionibacterium acnes), this protein is Small ribosomal subunit protein uS9.